A 417-amino-acid chain; its full sequence is UDP-N-acetylglucosamine 1-carboxyvinyltransferase (417 aa).

Position 22-23 (22-23 (KN)) interacts with phosphoenolpyruvate. Arg93 is a binding site for UDP-N-acetyl-alpha-D-glucosamine. Cys117 serves as the catalytic Proton donor. Cys117 carries the post-translational modification 2-(S-cysteinyl)pyruvic acid O-phosphothioketal. UDP-N-acetyl-alpha-D-glucosamine contacts are provided by residues 122–126 (RPVDQ), Asp305, and Ile327.

Belongs to the EPSP synthase family. MurA subfamily.

The protein resides in the cytoplasm. The enzyme catalyses phosphoenolpyruvate + UDP-N-acetyl-alpha-D-glucosamine = UDP-N-acetyl-3-O-(1-carboxyvinyl)-alpha-D-glucosamine + phosphate. It participates in cell wall biogenesis; peptidoglycan biosynthesis. Functionally, cell wall formation. Adds enolpyruvyl to UDP-N-acetylglucosamine. The protein is UDP-N-acetylglucosamine 1-carboxyvinyltransferase of Chromobacterium violaceum (strain ATCC 12472 / DSM 30191 / JCM 1249 / CCUG 213 / NBRC 12614 / NCIMB 9131 / NCTC 9757 / MK).